The sequence spans 395 residues: Phosphoglycerate kinase (395 aa).

Residues 20 to 22, Arg-35, 58 to 61, Arg-117, and Arg-150 each bind substrate; these read DLN and HFGR. ATP contacts are provided by residues Lys-200, Glu-322, and 352–355; that span reads GGDT.

The protein belongs to the phosphoglycerate kinase family. As to quaternary structure, monomer.

It is found in the cytoplasm. It carries out the reaction (2R)-3-phosphoglycerate + ATP = (2R)-3-phospho-glyceroyl phosphate + ADP. The protein operates within carbohydrate degradation; glycolysis; pyruvate from D-glyceraldehyde 3-phosphate: step 2/5. This is Phosphoglycerate kinase from Brucella suis biovar 1 (strain 1330).